We begin with the raw amino-acid sequence, 138 residues long: Large ribosomal subunit protein uL16 (138 aa).

Positions 1-13 are enriched in basic residues; that stretch reads MLQPARRKFRKEQ. The interval 1–22 is disordered; it reads MLQPARRKFRKEQKGRNTGVAT.

It belongs to the universal ribosomal protein uL16 family. As to quaternary structure, part of the 50S ribosomal subunit.

Its function is as follows. Binds 23S rRNA and is also seen to make contacts with the A and possibly P site tRNAs. In Acidovorax ebreus (strain TPSY) (Diaphorobacter sp. (strain TPSY)), this protein is Large ribosomal subunit protein uL16.